The sequence spans 79 residues: Sec-independent protein translocase protein TatA (79 aa).

A helical membrane pass occupies residues 1–21; it reads MGEFSLTHILLLAVIFLIFFG. The segment at 52–79 is disordered; sequence DIHDNQQVSHQNKQSMGQTQKQGENQNS. Positions 56 to 79 are enriched in polar residues; the sequence is NQQVSHQNKQSMGQTQKQGENQNS.

It belongs to the TatA/E family. In terms of assembly, the Tat system comprises two distinct complexes: a TatABC complex, containing multiple copies of TatA, TatB and TatC subunits, and a separate TatA complex, containing only TatA subunits. Substrates initially bind to the TatABC complex, which probably triggers association of the separate TatA complex to form the active translocon.

The protein resides in the cell inner membrane. Its function is as follows. Part of the twin-arginine translocation (Tat) system that transports large folded proteins containing a characteristic twin-arginine motif in their signal peptide across membranes. TatA could form the protein-conducting channel of the Tat system. The protein is Sec-independent protein translocase protein TatA of Bdellovibrio bacteriovorus (strain ATCC 15356 / DSM 50701 / NCIMB 9529 / HD100).